The primary structure comprises 327 residues: MQNLENIVAEALQAVEKASDVASLEALRVEYFGKKGHFTLLMQGLRDVPADERPAVGAKINEAKQKAQDALNGKKEQLETEELNAKLASESIDVSLPGRKTELGGLHPVSITIERVVKFFSELGFSVEKGPEIETDYYNFDALNIPAHHPARADHDTFWFDAERLLRTQTSGVQIRTMEKMQPPIRIMAPGRVYRNDYDQTHTPMFHQIELLYVDKKANFTELKGLLHDFLRAFFEEDLQVRFRPSYFPFTEPSAEVDVMGKNGKWLEVLGCGMVHPNVLRNVGIDPDEYTGFAVGMGVERLTMLRYNVTDLRSFFENDLRFLKQFK.

Residue glutamate 252 coordinates Mg(2+).

The protein belongs to the class-II aminoacyl-tRNA synthetase family. Phe-tRNA synthetase alpha subunit type 1 subfamily. Tetramer of two alpha and two beta subunits. It depends on Mg(2+) as a cofactor.

The protein localises to the cytoplasm. The enzyme catalyses tRNA(Phe) + L-phenylalanine + ATP = L-phenylalanyl-tRNA(Phe) + AMP + diphosphate + H(+). This Glaesserella parasuis serovar 5 (strain SH0165) (Haemophilus parasuis) protein is Phenylalanine--tRNA ligase alpha subunit.